The primary structure comprises 291 residues: Signal peptidase I (291 aa).

Residues 1 to 45 are Cytoplasmic-facing; the sequence is MTMKKLTSTTTTLWDNKLFINNLKNFMQTNTESNNNKTTAQEWKS. A helical transmembrane segment spans residues 46 to 66; that stretch reads FILVVVIALMIRILIIESFVV. The Periplasmic portion of the chain corresponds to 67–291; the sequence is PTGSMKATIL…IFRNLYSIED (225 aa). Residues Ser-70 and Lys-133 contribute to the active site.

It belongs to the peptidase S26 family.

It is found in the cell inner membrane. The catalysed reaction is Cleavage of hydrophobic, N-terminal signal or leader sequences from secreted and periplasmic proteins.. In Rickettsia bellii (strain RML369-C), this protein is Signal peptidase I (lepB).